An 874-amino-acid chain; its full sequence is Bifunctional uridylyltransferase/uridylyl-removing enzyme (874 aa).

Positions 1 to 336 are uridylyltransferase; the sequence is MIDTSTITNP…DNGKTVETIQ (336 aa). Residues 337–695 form a uridylyl-removing region; the sequence is LSDDFQIRGH…LSKKATRGGT (359 aa). One can recognise an HD domain in the interval 455 to 577; it reads VDEHSVRLIK…VRDEERLDYL (123 aa). ACT domains are found at residues 696–779 and 802–874; these read EVFV…RAPR and TMEL…TPQD.

This sequence belongs to the GlnD family. It depends on Mg(2+) as a cofactor.

The catalysed reaction is [protein-PII]-L-tyrosine + UTP = [protein-PII]-uridylyl-L-tyrosine + diphosphate. It carries out the reaction [protein-PII]-uridylyl-L-tyrosine + H2O = [protein-PII]-L-tyrosine + UMP + H(+). Uridylyltransferase (UTase) activity is inhibited by glutamine, while glutamine activates uridylyl-removing (UR) activity. Its function is as follows. Modifies, by uridylylation and deuridylylation, the PII regulatory proteins (GlnB and homologs), in response to the nitrogen status of the cell that GlnD senses through the glutamine level. Under low glutamine levels, catalyzes the conversion of the PII proteins and UTP to PII-UMP and PPi, while under higher glutamine levels, GlnD hydrolyzes PII-UMP to PII and UMP (deuridylylation). Thus, controls uridylylation state and activity of the PII proteins, and plays an important role in the regulation of nitrogen assimilation and metabolism. This Photobacterium profundum (strain SS9) protein is Bifunctional uridylyltransferase/uridylyl-removing enzyme.